Here is a 281-residue protein sequence, read N- to C-terminus: Ribonuclease HII (281 aa).

A disordered region spans residues 1-46; it reads MIRDTKQPIKVPAKPASRSGGKAKTVKPKTIKPKTSAKAAAAKPAS. Over residues 33-46 the composition is skewed to low complexity; the sequence is PKTSAKAAAAKPAS. An RNase H type-2 domain is found at 73 to 261; that stretch reads WPIAGCDEAG…VAAAWQKIEG (189 aa). Residues Asp79, Glu80, and Asp170 each coordinate a divalent metal cation.

It belongs to the RNase HII family. The cofactor is Mn(2+). It depends on Mg(2+) as a cofactor.

Its subcellular location is the cytoplasm. It catalyses the reaction Endonucleolytic cleavage to 5'-phosphomonoester.. Functionally, endonuclease that specifically degrades the RNA of RNA-DNA hybrids. This Rhodopseudomonas palustris (strain TIE-1) protein is Ribonuclease HII.